The following is a 289-amino-acid chain: Diaminopimelate epimerase (289 aa).

The substrate site is built by asparagine 13, glutamine 47, and asparagine 67. Residue cysteine 76 is the Proton donor of the active site. Residues 77–78, asparagine 167, asparagine 200, and 218–219 contribute to the substrate site; these read GN and ER. Catalysis depends on cysteine 227, which acts as the Proton acceptor. 228–229 is a binding site for substrate; that stretch reads GT.

This sequence belongs to the diaminopimelate epimerase family. In terms of assembly, homodimer.

Its subcellular location is the cytoplasm. The enzyme catalyses (2S,6S)-2,6-diaminopimelate = meso-2,6-diaminopimelate. It participates in amino-acid biosynthesis; L-lysine biosynthesis via DAP pathway; DL-2,6-diaminopimelate from LL-2,6-diaminopimelate: step 1/1. Functionally, catalyzes the stereoinversion of LL-2,6-diaminopimelate (L,L-DAP) to meso-diaminopimelate (meso-DAP), a precursor of L-lysine and an essential component of the bacterial peptidoglycan. The polypeptide is Diaminopimelate epimerase (Burkholderia pseudomallei (strain 668)).